The primary structure comprises 291 residues: N-acetylmannosamine kinase (291 aa).

Residues Ala-5 to Lys-12 and Gly-132 to Ser-139 contribute to the ATP site. His-156, Cys-166, Cys-168, and Cys-173 together coordinate Zn(2+).

Belongs to the ROK (NagC/XylR) family. NanK subfamily. Homodimer.

It catalyses the reaction an N-acyl-D-mannosamine + ATP = an N-acyl-D-mannosamine 6-phosphate + ADP + H(+). The protein operates within amino-sugar metabolism; N-acetylneuraminate degradation; D-fructose 6-phosphate from N-acetylneuraminate: step 2/5. Catalyzes the phosphorylation of N-acetylmannosamine (ManNAc) to ManNAc-6-P. The protein is N-acetylmannosamine kinase of Shigella boydii serotype 18 (strain CDC 3083-94 / BS512).